The chain runs to 466 residues: Asparagine--tRNA ligase (466 aa).

This sequence belongs to the class-II aminoacyl-tRNA synthetase family. As to quaternary structure, homodimer.

The protein localises to the cytoplasm. It carries out the reaction tRNA(Asn) + L-asparagine + ATP = L-asparaginyl-tRNA(Asn) + AMP + diphosphate + H(+). In Pectobacterium atrosepticum (strain SCRI 1043 / ATCC BAA-672) (Erwinia carotovora subsp. atroseptica), this protein is Asparagine--tRNA ligase.